Consider the following 821-residue polypeptide: DNA ligase (821 aa).

Residues 33–37, 82–83, and Glu113 contribute to the NAD(+) site; these read DVDYD and SL. Catalysis depends on Lys115, which acts as the N6-AMP-lysine intermediate. Arg136, Glu173, Lys290, and Lys314 together coordinate NAD(+). Positions 408, 411, 426, and 432 each coordinate Zn(2+). The BRCT domain occupies 741–821; the sequence is IVAGPLDGQT…RLLAYLAEHE (81 aa).

Belongs to the NAD-dependent DNA ligase family. LigA subfamily. The cofactor is Mg(2+). It depends on Mn(2+) as a cofactor.

The catalysed reaction is NAD(+) + (deoxyribonucleotide)n-3'-hydroxyl + 5'-phospho-(deoxyribonucleotide)m = (deoxyribonucleotide)n+m + AMP + beta-nicotinamide D-nucleotide.. Functionally, DNA ligase that catalyzes the formation of phosphodiester linkages between 5'-phosphoryl and 3'-hydroxyl groups in double-stranded DNA using NAD as a coenzyme and as the energy source for the reaction. It is essential for DNA replication and repair of damaged DNA. The chain is DNA ligase from Stenotrophomonas maltophilia (strain R551-3).